The sequence spans 880 residues: Alanine--tRNA ligase (880 aa).

Zn(2+) is bound by residues H567, H571, C669, and H673.

Belongs to the class-II aminoacyl-tRNA synthetase family. Zn(2+) is required as a cofactor.

It is found in the cytoplasm. The catalysed reaction is tRNA(Ala) + L-alanine + ATP = L-alanyl-tRNA(Ala) + AMP + diphosphate. In terms of biological role, catalyzes the attachment of alanine to tRNA(Ala) in a two-step reaction: alanine is first activated by ATP to form Ala-AMP and then transferred to the acceptor end of tRNA(Ala). Also edits incorrectly charged Ser-tRNA(Ala) and Gly-tRNA(Ala) via its editing domain. In Bacillus anthracis, this protein is Alanine--tRNA ligase.